The primary structure comprises 765 residues: Phosphoribosylformylglycinamidine synthase subunit PurL (765 aa).

H59 is an active-site residue. Positions 62 and 104 each coordinate ATP. E106 is a Mg(2+) binding site. Residues 107–110 (SHNH) and R129 each bind substrate. The active-site Proton acceptor is the H108. D130 serves as a coordination point for Mg(2+). Q254 contacts substrate. D282 is a Mg(2+) binding site. 326–328 (ESQ) provides a ligand contact to substrate. 2 residues coordinate ATP: N522 and G559. N560 contributes to the Mg(2+) binding site. Substrate is bound at residue S562.

It belongs to the FGAMS family. In terms of assembly, monomer. Part of the FGAM synthase complex composed of 1 PurL, 1 PurQ and 2 PurS subunits.

It is found in the cytoplasm. The catalysed reaction is N(2)-formyl-N(1)-(5-phospho-beta-D-ribosyl)glycinamide + L-glutamine + ATP + H2O = 2-formamido-N(1)-(5-O-phospho-beta-D-ribosyl)acetamidine + L-glutamate + ADP + phosphate + H(+). It functions in the pathway purine metabolism; IMP biosynthesis via de novo pathway; 5-amino-1-(5-phospho-D-ribosyl)imidazole from N(2)-formyl-N(1)-(5-phospho-D-ribosyl)glycinamide: step 1/2. Its function is as follows. Part of the phosphoribosylformylglycinamidine synthase complex involved in the purines biosynthetic pathway. Catalyzes the ATP-dependent conversion of formylglycinamide ribonucleotide (FGAR) and glutamine to yield formylglycinamidine ribonucleotide (FGAM) and glutamate. The FGAM synthase complex is composed of three subunits. PurQ produces an ammonia molecule by converting glutamine to glutamate. PurL transfers the ammonia molecule to FGAR to form FGAM in an ATP-dependent manner. PurS interacts with PurQ and PurL and is thought to assist in the transfer of the ammonia molecule from PurQ to PurL. The chain is Phosphoribosylformylglycinamidine synthase subunit PurL from Thermobifida fusca (strain YX).